The chain runs to 316 residues: tRNA dimethylallyltransferase (316 aa).

ATP is bound at residue 17 to 24; sequence GPTASGKT. A substrate-binding site is contributed by 19-24; the sequence is TASGKT. 4 interaction with substrate tRNA regions span residues 42-45, 166-170, 247-252, and 280-287; these read DSAL, QRLSR, RCVGYR, and KRQITWLR.

This sequence belongs to the IPP transferase family. As to quaternary structure, monomer. Requires Mg(2+) as cofactor.

The enzyme catalyses adenosine(37) in tRNA + dimethylallyl diphosphate = N(6)-dimethylallyladenosine(37) in tRNA + diphosphate. In terms of biological role, catalyzes the transfer of a dimethylallyl group onto the adenine at position 37 in tRNAs that read codons beginning with uridine, leading to the formation of N6-(dimethylallyl)adenosine (i(6)A). The polypeptide is tRNA dimethylallyltransferase (Escherichia coli O127:H6 (strain E2348/69 / EPEC)).